The following is a 142-amino-acid chain: MTLTRHQIRERAFQMLFALNANPEADHDALYQRVLTDDPNQLVPVPDYLATLVNGVLAHQSELDAQIDQYLSTGWQLKRIAKTDLVILRMAFYEIEHVDDVPNRVAVNEALELAKNFSDDRSRRFINGVLAHTLDDETDTQA.

Belongs to the NusB family.

In terms of biological role, involved in transcription antitermination. Required for transcription of ribosomal RNA (rRNA) genes. Binds specifically to the boxA antiterminator sequence of the ribosomal RNA (rrn) operons. The protein is Transcription antitermination protein NusB of Levilactobacillus brevis (strain ATCC 367 / BCRC 12310 / CIP 105137 / JCM 1170 / LMG 11437 / NCIMB 947 / NCTC 947) (Lactobacillus brevis).